Consider the following 394-residue polypeptide: Elongation factor Tu (394 aa).

Residues Lys10 to Thr204 form the tr-type G domain. The G1 stretch occupies residues Gly19–Thr26. GTP is bound at residue Gly19 to Thr26. Thr26 provides a ligand contact to Mg(2+). The G2 stretch occupies residues Gly60–Asn64. The interval Asp81–Gly84 is G3. Residues Asp81–His85 and Asn136–Asp139 contribute to the GTP site. Residues Asn136–Asp139 are G4. The tract at residues Ser174 to Leu176 is G5.

It belongs to the TRAFAC class translation factor GTPase superfamily. Classic translation factor GTPase family. EF-Tu/EF-1A subfamily. Monomer.

The protein localises to the cytoplasm. The enzyme catalyses GTP + H2O = GDP + phosphate + H(+). In terms of biological role, GTP hydrolase that promotes the GTP-dependent binding of aminoacyl-tRNA to the A-site of ribosomes during protein biosynthesis. The sequence is that of Elongation factor Tu from Mycoplasma genitalium (strain ATCC 33530 / DSM 19775 / NCTC 10195 / G37) (Mycoplasmoides genitalium).